The chain runs to 212 residues: Prolactin-3C1 (212 aa).

The signal sequence occupies residues 1-29 (MQLSLTQARTWKGLFLLVSCMFLWVYVTA). Cys80 and Cys188 are oxidised to a cystine. N-linked (GlcNAc...) asparagine glycosylation occurs at Asn100.

The protein belongs to the somatotropin/prolactin family. Expressed exclusively in decidua.

The protein resides in the secreted. The protein is Prolactin-3C1 (Prl3c1) of Mus musculus (Mouse).